A 99-amino-acid chain; its full sequence is Transcriptional regulator WhiB2 (99 aa).

The 58-residue stretch at 33-90 folds into the 4Fe-4S Wbl-type domain; the sequence is LCAQTDPEAFFPEKGGSTRDAKRVCAKCEVREQCLKWAIDHDERFGIWGGMSERERRR. The [4Fe-4S] cluster site is built by Cys34, Cys57, Cys60, and Cys66.

This sequence belongs to the WhiB family. Requires [4Fe-4S] cluster as cofactor. The Fe-S cluster can be nitrosylated by nitric oxide (NO). In terms of processing, upon Fe-S cluster removal intramolecular disulfide bonds are formed.

The protein resides in the cytoplasm. Functionally, acts as a transcriptional regulator. Probably redox-responsive. The apo- but not holo-form probably binds DNA. In Bifidobacterium longum (strain NCC 2705), this protein is Transcriptional regulator WhiB2 (whiB2).